The primary structure comprises 89 residues: Small ribosomal subunit protein uS15 (89 aa).

Belongs to the universal ribosomal protein uS15 family. Part of the 30S ribosomal subunit. Forms a bridge to the 50S subunit in the 70S ribosome, contacting the 23S rRNA.

One of the primary rRNA binding proteins, it binds directly to 16S rRNA where it helps nucleate assembly of the platform of the 30S subunit by binding and bridging several RNA helices of the 16S rRNA. In terms of biological role, forms an intersubunit bridge (bridge B4) with the 23S rRNA of the 50S subunit in the ribosome. The polypeptide is Small ribosomal subunit protein uS15 (Buchnera aphidicola subsp. Schizaphis graminum (strain Sg)).